A 100-amino-acid polypeptide reads, in one-letter code: Urease subunit gamma (100 aa).

This sequence belongs to the urease gamma subunit family. Heterotrimer of UreA (gamma), UreB (beta) and UreC (alpha) subunits. Three heterotrimers associate to form the active enzyme.

It is found in the cytoplasm. It carries out the reaction urea + 2 H2O + H(+) = hydrogencarbonate + 2 NH4(+). It functions in the pathway nitrogen metabolism; urea degradation; CO(2) and NH(3) from urea (urease route): step 1/1. The sequence is that of Urease subunit gamma from Ralstonia pickettii (strain 12J).